The primary structure comprises 105 residues: BLOC-1-related complex subunit 7 (105 aa).

The protein belongs to the BORCS7 family. Component of the BLOC-one-related complex (BORC) which is composed of BLOC1S1, BLOC1S2, BORCS5, BORCS6, BORCS7, BORCS8, KXD1 and SNAPIN.

The protein localises to the lysosome membrane. In terms of biological role, as part of the BORC complex may play a role in lysosomes movement and localization at the cell periphery. Associated with the cytosolic face of lysosomes, the BORC complex may recruit ARL8B and couple lysosomes to microtubule plus-end-directed kinesin motor. The protein is BLOC-1-related complex subunit 7 of Mus musculus (Mouse).